Here is a 301-residue protein sequence, read N- to C-terminus: G-protein coupled receptor homolog U51 (301 aa).

Over 1 to 15 the chain is Extracellular; sequence MEKETKSLAWPATAE. A helical membrane pass occupies residues 16–36; that stretch reads FYGWVFIFSSIQLCTMVLLTV. Residues 37–48 are Cytoplasmic-facing; it reads RFNSFKVGREYA. The helical transmembrane segment at 49 to 69 threads the bilayer; the sequence is VFTFAGMSFNCFLLPIKMGLL. The Extracellular portion of the chain corresponds to 70 to 82; that stretch reads SGHWSLPRDFCAI. Residues 83-103 form a helical membrane-spanning segment; the sequence is LLYIDDFSIYFSSWSLVFMAI. At 104-122 the chain is on the cytoplasmic side; the sequence is ERINHFCYSTPLLNENSKA. A helical transmembrane segment spans residues 123–143; that stretch reads LAKVCFPIVWIISGVQALQML. At 144–168 the chain is on the extracellular side; sequence NNYKATALQNETPQCFLAFLRSGYD. The helical transmembrane segment at 169-189 threads the bilayer; sequence MWLMLVYSVMIPVMLVFIYIY. Residues 190–199 lie on the Cytoplasmic side of the membrane; sequence SKNFMLLKDE. Residues 200–220 traverse the membrane as a helical segment; the sequence is LSTVTTYLCIYLLLGTIAHLP. Residues 221–238 are Extracellular-facing; the sequence is KAGLSEIESDKIFYGLRD. A helical membrane pass occupies residues 239–259; it reads IFMALPVLKVYYIPVMAYCMA. Residues 260 to 301 lie on the Cytoplasmic side of the membrane; the sequence is CDDHTVPVRLCSIWLVNLCKKCFSCTRREKESDLEVGIKMLK.

The protein belongs to the G-protein coupled receptor 1 family.

It localises to the host cell membrane. This is G-protein coupled receptor homolog U51 (U51) from Homo sapiens (Human).